The following is a 661-amino-acid chain: Altered inheritance of mitochondria protein 3-1 (661 aa).

7 disordered regions span residues 19 to 99, 116 to 142, 154 to 194, 263 to 419, 431 to 473, 487 to 563, and 615 to 661; these read TKTV…YSGY, AQNTPYSSPAQQQPVSPQPPVQNSQYN, QPAG…TFQS, LPQQ…DSSS, RNIP…SPGI, YAGH…RKDN, and EAAT…FVHS. Basic and acidic residues predominate over residues 37–58; the sequence is KDKDTHHTDHHEEDEYSEDYHT. Residues 120–142 show a composition bias toward low complexity; it reads PYSSPAQQQPVSPQPPVQNSQYN. Residues 263–318 show a composition bias toward low complexity; the sequence is LPQQQQQQQQQPEYNTQLQQNQQLHNQQAYGQQQQIYSNNTQPQYVSQTQQTSYTQ. 2 stretches are compositionally biased toward polar residues: residues 319-328 and 356-371; these read NAPPQQTRSP and VNQTAITSTNSANEAL. The span at 390-399 shows a compositional bias: basic and acidic residues; that stretch reads THRDRGRASV. A compositionally biased stretch (polar residues) spans 406–419; the sequence is ENMQTNNSTIDSSS. The segment covering 434–447 has biased composition (low complexity); it reads PAPAVGPPGAATRA. Polar residues-rich tracts occupy residues 458–473, 512–533, and 541–552; these read SQSMSTNSVVETSPGI, RSTSTKMNTQPNPQTPISPSRD, and RSTVSSIQSSNR.

It belongs to the AIM3 family.

The protein localises to the membrane raft. The chain is Altered inheritance of mitochondria protein 3-1 (AIM3-1) from Candida glabrata (strain ATCC 2001 / BCRC 20586 / JCM 3761 / NBRC 0622 / NRRL Y-65 / CBS 138) (Yeast).